A 201-amino-acid chain; its full sequence is Protein Thf1 (201 aa).

Positions 174-201 (IYKSSISKMEQAKELIQEQRIKDKKKTL) form a coiled coil.

The protein belongs to the THF1 family.

Functionally, may be involved in photosynthetic membrane biogenesis. The sequence is that of Protein Thf1 from Prochlorococcus marinus (strain MIT 9312).